The sequence spans 393 residues: Acetylornithine aminotransferase (393 aa).

Pyridoxal 5'-phosphate is bound by residues 96 to 97 (GT) and Phe-129. N(2)-acetyl-L-ornithine is bound at residue Arg-132. Residue 214 to 217 (DEVQ) participates in pyridoxal 5'-phosphate binding. At Lys-243 the chain carries N6-(pyridoxal phosphate)lysine. A N(2)-acetyl-L-ornithine-binding site is contributed by Ser-271. A pyridoxal 5'-phosphate-binding site is contributed by Thr-272.

Belongs to the class-III pyridoxal-phosphate-dependent aminotransferase family. ArgD subfamily. Homodimer. Pyridoxal 5'-phosphate serves as cofactor.

Its subcellular location is the cytoplasm. The enzyme catalyses N(2)-acetyl-L-ornithine + 2-oxoglutarate = N-acetyl-L-glutamate 5-semialdehyde + L-glutamate. The protein operates within amino-acid biosynthesis; L-arginine biosynthesis; N(2)-acetyl-L-ornithine from L-glutamate: step 4/4. The sequence is that of Acetylornithine aminotransferase from Rhodobacter capsulatus (strain ATCC BAA-309 / NBRC 16581 / SB1003).